Reading from the N-terminus, the 193-residue chain is MARARQEGSSPEPVEGLARDSPRPFPLGRLMPSAVSCGLCEPGLPAAPAAPALLPAAYLCAPTAPPAVTAALGGPRWPGGHRSRPRGPRPDGPQPSLSPAQQHLESPVPSAPEALAGGPTQAAPGVRVEEEEWAREIGAQLRRMADDLNAQYERRRQEEQHRHRPSPWRVMYNLFMGLLPLPRDPGAPEMEPN.

2 disordered regions span residues 1–32 (MARARQEGSSPEPVEGLARDSPRPFPLGRLMP) and 71–131 (ALGG…VEEE). The residue at position 10 (serine 10) is a Phosphoserine. The BH3 motif lies at 137–151 (IGAQLRRMADDLNAQ).

Belongs to the Bcl-2 family. In terms of assembly, interacts with MCL1 and BCL2A1. Interacts (via BH3 domain) with BCL2 and BCL2L1/BCL-XL. Interacts (via BH3 domain) with NOL3/ARC (via CARD domain); this interaction prevents BBC3 association with BCL2 and results in CASP8 activation.

The protein resides in the mitochondrion. Its function is as follows. Essential mediator of p53/TP53-dependent and p53/TP53-independent apoptosis. Promotes partial unfolding of BCL2L1 and dissociation of BCL2L1 from p53/TP53, releasing the bound p53/TP53 to induce apoptosis. Regulates ER stress-induced neuronal apoptosis. This Rattus norvegicus (Rat) protein is Bcl-2-binding component 3 (Bbc3).